We begin with the raw amino-acid sequence, 445 residues long: GTPase Der (445 aa).

2 consecutive EngA-type G domains span residues phenylalanine 2–glutamate 166 and isoleucine 182–tryptophan 355. Residues glycine 8–serine 15, aspartate 55–tyrosine 59, asparagine 118–aspartate 121, glycine 188–serine 195, aspartate 235–methionine 239, and asparagine 300–aspartate 303 each bind GTP. The KH-like domain occupies lysine 356–glutamate 440.

This sequence belongs to the TRAFAC class TrmE-Era-EngA-EngB-Septin-like GTPase superfamily. EngA (Der) GTPase family. Associates with the 50S ribosomal subunit.

Its function is as follows. GTPase that plays an essential role in the late steps of ribosome biogenesis. The polypeptide is GTPase Der (Sulfurihydrogenibium sp. (strain YO3AOP1)).